Reading from the N-terminus, the 335-residue chain is Adenosine deaminase (335 aa).

2 residues coordinate Zn(2+): H12 and H14. Substrate contacts are provided by H14 and D16. Position 197 (H197) interacts with Zn(2+). The active-site Proton donor is E200. Zn(2+) is bound at residue D278.

This sequence belongs to the metallo-dependent hydrolases superfamily. Adenosine and AMP deaminases family. Adenosine deaminase subfamily. Zn(2+) is required as a cofactor.

It catalyses the reaction adenosine + H2O + H(+) = inosine + NH4(+). The catalysed reaction is 2'-deoxyadenosine + H2O + H(+) = 2'-deoxyinosine + NH4(+). Its function is as follows. Catalyzes the hydrolytic deamination of adenosine and 2-deoxyadenosine. This chain is Adenosine deaminase, found in Clostridium botulinum (strain Kyoto / Type A2).